The sequence spans 118 residues: Large ribosomal subunit protein bL20 (118 aa).

It belongs to the bacterial ribosomal protein bL20 family.

In terms of biological role, binds directly to 23S ribosomal RNA and is necessary for the in vitro assembly process of the 50S ribosomal subunit. It is not involved in the protein synthesizing functions of that subunit. This is Large ribosomal subunit protein bL20 from Methylibium petroleiphilum (strain ATCC BAA-1232 / LMG 22953 / PM1).